Consider the following 354-residue polypeptide: NADH-ubiquinone oxidoreductase chain 2 (354 aa).

Transmembrane regions (helical) follow at residues 5–25 (ILMV…SSHH), 26–46 (WFTL…ILSY), 60–80 (FLVQ…QAWL), 96–116 (FLMT…YWFP), 122–142 (VGFI…FAVL), 149–169 (LNIS…GWGG), 198–218 (VSVA…VFFM), 242–262 (AGLV…GFLI), 274–294 (GCFI…FFYL), and 330–350 (VLLS…PVFI).

The protein belongs to the complex I subunit 2 family.

It is found in the mitochondrion inner membrane. The enzyme catalyses a ubiquinone + NADH + 5 H(+)(in) = a ubiquinol + NAD(+) + 4 H(+)(out). Its function is as follows. Core subunit of the mitochondrial membrane respiratory chain NADH dehydrogenase (Complex I) that is believed to belong to the minimal assembly required for catalysis. Complex I functions in the transfer of electrons from NADH to the respiratory chain. The immediate electron acceptor for the enzyme is believed to be ubiquinone. The sequence is that of NADH-ubiquinone oxidoreductase chain 2 (ND2) from Patiria pectinifera (Starfish).